The sequence spans 180 residues: MTLKELAIGCGTTLRSIWMIGMQAFNKRETRMYPDVPVNPPPRFRGRIVLTRDPDGDERCVACNLCAVACPVDCISLQKAETKDGRWYPEFFRINFSRCIFCGLCEEACPTTAIQLTPDFEMGEFKRQDLVYEKDDLLISGPGKYPEYNFYRMAGMAIAGKDKGEAENEAKPIDVKGLLP.

4Fe-4S ferredoxin-type domains lie at 48–80 (IVLT…LQKA) and 90–119 (EFFR…LTPD). Positions 60, 63, 66, 70, 99, 102, 105, and 109 each coordinate [4Fe-4S] cluster.

It belongs to the complex I 23 kDa subunit family. NDH-1 is composed of 13 different subunits. Subunits NuoA, H, J, K, L, M, N constitute the membrane sector of the complex. The cofactor is [4Fe-4S] cluster.

Its subcellular location is the cell inner membrane. It catalyses the reaction a quinone + NADH + 5 H(+)(in) = a quinol + NAD(+) + 4 H(+)(out). NDH-1 shuttles electrons from NADH, via FMN and iron-sulfur (Fe-S) centers, to quinones in the respiratory chain. The immediate electron acceptor for the enzyme in this species is believed to be ubiquinone. Couples the redox reaction to proton translocation (for every two electrons transferred, four hydrogen ions are translocated across the cytoplasmic membrane), and thus conserves the redox energy in a proton gradient. This is NADH-quinone oxidoreductase subunit I from Sodalis glossinidius (strain morsitans).